The following is a 348-amino-acid chain: MLPIRDCVQQTPGYVPGEQPQTTDYIKLNTNENPYAPPDEIFNNLEEELKKVRLYPDPVSTKLRKAAGEVFGFSYEQILAGNGSDDILNIALRTFVNPGETVAFLDLTYSLYETIAKVHGATIQTISTNENFELDSPLICPEAKLIFVASPNPPLGKHLNRQYLKETCEQATGVVLIDEAYVDFSDEDHWDFIKEYDNVIVSRTMSKSYSLAGMRVGFGISSREIIEQMNKVRDSYNLDRIAQTLGANCFQFQDYFQSIWQKVRTTRNRLIASLRNLDFFVFDSDANFVLASPQWIEASDLYTKLKERKVLVRYFKHPRISNYIRITVGTDAEIDRLLEVIKQLKNES.

An N6-(pyridoxal phosphate)lysine modification is found at K207.

It belongs to the class-II pyridoxal-phosphate-dependent aminotransferase family. Histidinol-phosphate aminotransferase subfamily. In terms of assembly, homodimer. Pyridoxal 5'-phosphate is required as a cofactor.

It carries out the reaction L-histidinol phosphate + 2-oxoglutarate = 3-(imidazol-4-yl)-2-oxopropyl phosphate + L-glutamate. It participates in amino-acid biosynthesis; L-histidine biosynthesis; L-histidine from 5-phospho-alpha-D-ribose 1-diphosphate: step 7/9. This chain is Histidinol-phosphate aminotransferase, found in Crocosphaera subtropica (strain ATCC 51142 / BH68) (Cyanothece sp. (strain ATCC 51142)).